A 142-amino-acid polypeptide reads, in one-letter code: DNA-directed RNA polymerases I, II, and III subunit rpabc3 (142 aa).

Residues 16–40 form a non-specific ssDNA binding region; sequence DPDGKKFDRVSRFVCYSENYEMDLQ.

It belongs to the eukaryotic RPB8 RNA polymerase subunit family. As to quaternary structure, component of the RNA polymerase I (Pol I), RNA polymerase II (Pol II) and RNA polymerase III (Pol III) complexes consisting of at least 13, 12 and 17 subunits, respectively. Directly interacts with POLR2A.

It is found in the nucleus. The protein resides in the nucleolus. Functionally, DNA-dependent RNA polymerase catalyzes the transcription of DNA into RNA using the four ribonucleoside triphosphates as substrates. Common component of RNA polymerases I, II and III which synthesize ribosomal RNA precursors, mRNA precursors and many functional non-coding RNAs, and small RNAs, such as 5S rRNA and tRNAs, respectively. The sequence is that of DNA-directed RNA polymerases I, II, and III subunit rpabc3 (polr2h) from Dictyostelium discoideum (Social amoeba).